The primary structure comprises 462 residues: Integrator complex subunit 12 (462 aa).

The tract at residues 42–132 (GIDSSYRPSQ…PETQSSPITV (91 aa)) is disordered. The segment covering 59–86 (ISSTKNISIKQEPKISSSLPSGNNNGKV) has biased composition (polar residues). K68 participates in a covalent cross-link: Glycyl lysine isopeptide (Lys-Gly) (interchain with G-Cter in SUMO2). Residues 88–124 (TTEKVKKEAEKRPADKMKSDITEGVDIPKKPRLEKPE) show a composition bias toward basic and acidic residues. S128 carries the phosphoserine modification. The PHD-type zinc-finger motif lies at 159 to 215 (GLACVVCRQMMVASGNQLVECQECHNLYHRDCHKPQVTDKEANDPRLVWYCARCTRQ). K254 is covalently cross-linked (Glycyl lysine isopeptide (Lys-Gly) (interchain with G-Cter in SUMO2)). The segment covering 301–328 (SSAGPSTAKLSSTTQNNTGKPATSSANQ) has biased composition (polar residues). Residues 301-462 (SSAGPSTAKL…KKAAQKKLKK (162 aa)) form a disordered region. Composition is skewed to low complexity over residues 347–358 (KIGSNNSTTPTV) and 382–437 (VSKV…GPTS). A compositionally biased stretch (basic residues) spans 449 to 462 (QMVKKKAAQKKLKK).

It belongs to the Integrator subunit 12 family. In terms of assembly, component of the Integrator complex, composed of core subunits INTS1, INTS2, INTS3, INTS4, INTS5, INTS6, INTS7, INTS8, INTS9/RC74, INTS10, INTS11/CPSF3L, INTS12, INTS13, INTS14 and INTS15. The core complex associates with protein phosphatase 2A subunits PPP2CA and PPP2R1A, to form the Integrator-PP2A (INTAC) complex. Dephosphorylated at Ser-128 by the PNUTS-PP1 complex, promoting RNA polymerase II transcription pause-release.

Its subcellular location is the nucleus. Its function is as follows. Component of the integrator complex, a multiprotein complex that terminates RNA polymerase II (Pol II) transcription in the promoter-proximal region of genes. The integrator complex provides a quality checkpoint during transcription elongation by driving premature transcription termination of transcripts that are unfavorably configured for transcriptional elongation: the complex terminates transcription by (1) catalyzing dephosphorylation of the C-terminal domain (CTD) of Pol II subunit POLR2A/RPB1 and SUPT5H/SPT5, (2) degrading the exiting nascent RNA transcript via endonuclease activity and (3) promoting the release of Pol II from bound DNA. The integrator complex is also involved in terminating the synthesis of non-coding Pol II transcripts, such as enhancer RNAs (eRNAs), small nuclear RNAs (snRNAs), telomerase RNAs and long non-coding RNAs (lncRNAs). Mediates recruitment of cytoplasmic dynein to the nuclear envelope, probably as component of the integrator complex. The protein is Integrator complex subunit 12 of Homo sapiens (Human).